The chain runs to 214 residues: Holliday junction branch migration complex subunit RuvA (214 aa).

The interval M1 to A63 is domain I. The tract at residues D64–G139 is domain II. A flexible linker region spans residues G139 to S143. The segment at P144–G214 is domain III.

Belongs to the RuvA family. In terms of assembly, homotetramer. Forms an RuvA(8)-RuvB(12)-Holliday junction (HJ) complex. HJ DNA is sandwiched between 2 RuvA tetramers; dsDNA enters through RuvA and exits via RuvB. An RuvB hexamer assembles on each DNA strand where it exits the tetramer. Each RuvB hexamer is contacted by two RuvA subunits (via domain III) on 2 adjacent RuvB subunits; this complex drives branch migration. In the full resolvosome a probable DNA-RuvA(4)-RuvB(12)-RuvC(2) complex forms which resolves the HJ.

It localises to the cytoplasm. Its function is as follows. The RuvA-RuvB-RuvC complex processes Holliday junction (HJ) DNA during genetic recombination and DNA repair, while the RuvA-RuvB complex plays an important role in the rescue of blocked DNA replication forks via replication fork reversal (RFR). RuvA specifically binds to HJ cruciform DNA, conferring on it an open structure. The RuvB hexamer acts as an ATP-dependent pump, pulling dsDNA into and through the RuvAB complex. HJ branch migration allows RuvC to scan DNA until it finds its consensus sequence, where it cleaves and resolves the cruciform DNA. The sequence is that of Holliday junction branch migration complex subunit RuvA from Renibacterium salmoninarum (strain ATCC 33209 / DSM 20767 / JCM 11484 / NBRC 15589 / NCIMB 2235).